The primary structure comprises 150 residues: Large ribosomal subunit protein uL23 (150 aa).

The tract at residues 1–24 (MNKENKTQAVNKAKNTAKVAKKGS) is disordered. A compositionally biased stretch (low complexity) spans 7–18 (TQAVNKAKNTAK).

This sequence belongs to the universal ribosomal protein uL23 family.

In Tetrahymena thermophila (strain SB210), this protein is Large ribosomal subunit protein uL23 (RPL23A).